The following is a 320-amino-acid chain: Protein TsetseEP (320 aa).

A signal peptide spans 1 to 19 (MKFFISFAFLCLVLSCVAA). Residues 192–320 (GLPEPEPEPE…ESKPNSLFNF (129 aa)) are disordered. The span at 194–308 (PEPEPEPEPE…EPEPEPEPQP (115 aa)) shows a compositional bias: acidic residues. Residues 194 to 311 (PEPEPEPEPE…PEPEPQPEPE (118 aa)) form a 59 X 2 AA tandem repeats of P-E region.

In terms of tissue distribution, expressed in the gut, but not salivary glands, of female and male flies (at protein level). Present in vesicles in midgut cells and in the lumen of the gut.

The protein resides in the secreted. The chain is Protein TsetseEP from Glossina morsitans morsitans (Savannah tsetse fly).